The sequence spans 190 residues: Peptidyl-tRNA hydrolase (190 aa).

Tyr-17 contacts tRNA. His-22 functions as the Proton acceptor in the catalytic mechanism. Tyr-67 and Asn-69 together coordinate tRNA.

Belongs to the PTH family. In terms of assembly, monomer.

The protein resides in the cytoplasm. It carries out the reaction an N-acyl-L-alpha-aminoacyl-tRNA + H2O = an N-acyl-L-amino acid + a tRNA + H(+). Hydrolyzes ribosome-free peptidyl-tRNAs (with 1 or more amino acids incorporated), which drop off the ribosome during protein synthesis, or as a result of ribosome stalling. Its function is as follows. Catalyzes the release of premature peptidyl moieties from peptidyl-tRNA molecules trapped in stalled 50S ribosomal subunits, and thus maintains levels of free tRNAs and 50S ribosomes. This is Peptidyl-tRNA hydrolase from Moorella thermoacetica (strain ATCC 39073 / JCM 9320).